A 200-amino-acid chain; its full sequence is Pyridoxal 5'-phosphate synthase subunit PdxT (200 aa).

52 to 54 provides a ligand contact to L-glutamine; sequence GES. The active-site Nucleophile is the Cys-84. L-glutamine-binding positions include Arg-116 and 145–146; that span reads IR. Catalysis depends on charge relay system residues His-181 and Glu-183.

The protein belongs to the glutaminase PdxT/SNO family. In terms of assembly, in the presence of PdxS, forms a dodecamer of heterodimers. Only shows activity in the heterodimer.

The enzyme catalyses aldehydo-D-ribose 5-phosphate + D-glyceraldehyde 3-phosphate + L-glutamine = pyridoxal 5'-phosphate + L-glutamate + phosphate + 3 H2O + H(+). It carries out the reaction L-glutamine + H2O = L-glutamate + NH4(+). Its pathway is cofactor biosynthesis; pyridoxal 5'-phosphate biosynthesis. Functionally, catalyzes the hydrolysis of glutamine to glutamate and ammonia as part of the biosynthesis of pyridoxal 5'-phosphate. The resulting ammonia molecule is channeled to the active site of PdxS. The chain is Pyridoxal 5'-phosphate synthase subunit PdxT from Saccharolobus islandicus (strain Y.G.57.14 / Yellowstone #1) (Sulfolobus islandicus).